The chain runs to 341 residues: NADH-quinone oxidoreductase subunit H 1 (341 aa).

The next 8 helical transmembrane spans lie at 13–33 (LVVI…IAYI), 82–102 (GLFL…WAVI), 115–135 (VGVL…IMAG), 161–181 (IGFV…TAIV), 190–210 (MLGW…VSAL), 248–268 (YVAI…GWLP), 277–297 (WVPG…LFAM), and 313–333 (LGWK…ASVL).

Belongs to the complex I subunit 1 family. As to quaternary structure, NDH-1 is composed of 14 different subunits. Subunits NuoA, H, J, K, L, M, N constitute the membrane sector of the complex.

The protein resides in the cell inner membrane. The catalysed reaction is a quinone + NADH + 5 H(+)(in) = a quinol + NAD(+) + 4 H(+)(out). Functionally, NDH-1 shuttles electrons from NADH, via FMN and iron-sulfur (Fe-S) centers, to quinones in the respiratory chain. The immediate electron acceptor for the enzyme in this species is believed to be ubiquinone. Couples the redox reaction to proton translocation (for every two electrons transferred, four hydrogen ions are translocated across the cytoplasmic membrane), and thus conserves the redox energy in a proton gradient. This subunit may bind ubiquinone. The protein is NADH-quinone oxidoreductase subunit H 1 of Rhodopseudomonas palustris (strain ATCC BAA-98 / CGA009).